Reading from the N-terminus, the 295-residue chain is Transcriptional regulator SirC (295 aa).

One can recognise an HTH araC/xylS-type domain in the interval 195-292 (EKVYNIIISD…KITPLSFMRT (98 aa)). 2 DNA-binding regions (H-T-H motif) span residues 212–233 (AEVA…AAEE) and 259–282 (ISQV…KRHF).

Functionally, positive regulator of the expression of the invasion-associated type III secretion system encoded within SPI-1 (pathogenicity island 1). This is Transcriptional regulator SirC (sirC) from Salmonella typhi.